Consider the following 784-residue polypeptide: Ribosome biogenesis protein BOP1 homolog (784 aa).

Over residues 1-11 (MTKKLALKRRG) the composition is skewed to basic residues. A disordered region spans residues 1 to 159 (MTKKLALKRR…DSDTSDEEDI (159 aa)). Composition is skewed to acidic residues over residues 27–36 (SENEEEEEDL), 45–54 (EDSTDDEGID), 62–73 (SEELQFESDEEG), and 84–111 (AEED…EDEE). Composition is skewed to basic and acidic residues over residues 112-123 (KVSKSKQSDDKP) and 138-148 (LPKRDSSKPEY). Over residues 149 to 158 (QDSDTSDEED) the composition is skewed to acidic residues. WD repeat units lie at residues 445-486 (GHTD…RTIE), 488-526 (DEVV…KVLV), 570-612 (THFK…SQIP), 615-653 (KSKG…LVKK), 656-695 (TNSK…KPYQ), 699-738 (LHRN…DLLQ), and 754-784 (RDEF…RLYT).

It belongs to the WD repeat BOP1/ERB1 family.

The protein localises to the nucleus. The protein resides in the nucleolus. Its subcellular location is the nucleoplasm. Functionally, required for maturation of ribosomal RNAs and formation of the large ribosomal subunit. This is Ribosome biogenesis protein BOP1 homolog from Drosophila sechellia (Fruit fly).